The following is a 341-amino-acid chain: MSKDIKILAIESSCDETAAAVVVNGRDVLSNVIASQIDIHTKFGGVVPEVASRKHIEAIGIVVKEALEEANVTFDDIDAIGVTYGPGLVGALLVGVQYAKSLAYALKKPLIGVNHIEGHISANFIQYKDLKPPFVCLVVSGGHTFIVHMKDYGEFDILGETRDDAAGEAFDKVARAIGLGYPGGPKIDKISNEGNENAIVFPKANFHDKDCLDFSFSGVKSAVLNYINKMNMKNEEINRADVAASFQKSVVDVLVDNVIKACKLRNVDKIAIAGGVASNTHLREAMINAGKKNKIDVLFPAPILCTDNAAMIGSAAYFEYLKGRVAPLELNAIPNLKLGER.

His115 and His119 together coordinate Fe cation. Residues 138–142, Asp171, Gly184, Asp188, and Asn279 contribute to the substrate site; that span reads VVSGG. A Fe cation-binding site is contributed by Asp307.

This sequence belongs to the KAE1 / TsaD family. It depends on Fe(2+) as a cofactor.

The protein resides in the cytoplasm. The catalysed reaction is L-threonylcarbamoyladenylate + adenosine(37) in tRNA = N(6)-L-threonylcarbamoyladenosine(37) in tRNA + AMP + H(+). In terms of biological role, required for the formation of a threonylcarbamoyl group on adenosine at position 37 (t(6)A37) in tRNAs that read codons beginning with adenine. Is involved in the transfer of the threonylcarbamoyl moiety of threonylcarbamoyl-AMP (TC-AMP) to the N6 group of A37, together with TsaE and TsaB. TsaD likely plays a direct catalytic role in this reaction. The polypeptide is tRNA N6-adenosine threonylcarbamoyltransferase (Clostridium novyi (strain NT)).